The sequence spans 439 residues: 26S proteasome regulatory subunit 6A (439 aa).

M1 is modified (N-acetylmethionine). Position 9 is a phosphoserine (S9). An ATP-binding site is contributed by 227-234 (GPPGTGKT). The residue at position 376 (S376) is a Phosphoserine.

It belongs to the AAA ATPase family. In terms of assembly, component of the 19S proteasome regulatory particle complex. The 26S proteasome consists of a 20S core particle (CP) and two 19S regulatory subunits (RP). The regulatory particle is made of a lid composed of 9 subunits, a base containing 6 ATPases including PSMC3 and few additional components. Interacts with PAAF1.

The protein localises to the cytoplasm. It localises to the nucleus. Its function is as follows. Component of the 26S proteasome, a multiprotein complex involved in the ATP-dependent degradation of ubiquitinated proteins. This complex plays a key role in the maintenance of protein homeostasis by removing misfolded or damaged proteins, which could impair cellular functions, and by removing proteins whose functions are no longer required. Therefore, the proteasome participates in numerous cellular processes, including cell cycle progression, apoptosis, or DNA damage repair. PSMC3 belongs to the heterohexameric ring of AAA (ATPases associated with diverse cellular activities) proteins that unfolds ubiquitinated target proteins that are concurrently translocated into a proteolytic chamber and degraded into peptides. This Rattus norvegicus (Rat) protein is 26S proteasome regulatory subunit 6A (Psmc3).